Here is a 117-residue protein sequence, read N- to C-terminus: Toxin CSTX-8 (117 aa).

The N-terminal stretch at 1–20 is a signal peptide; sequence MKVLVICAVLFLAIFSNSSA. Positions 21–47 are excised as a propeptide; sequence ETEDDFLEDESFQADDVIPFLASEQVR. 4 cysteine pairs are disulfide-bonded: cysteine 50-cysteine 65, cysteine 57-cysteine 74, cysteine 64-cysteine 95, and cysteine 76-cysteine 93. Residues 82-87 constitute a propeptide that is removed on maturation; the sequence is RSETDR. Threonine amide is present on threonine 116.

Belongs to the neurotoxin 19 (CSTX) family. 12 subfamily. As to quaternary structure, heterodimer of A and B chains; disulfide-linked. Interacts with CSTX-1 (AC P81694), and with CSTX-9 (AC P58604). Expressed by the venom gland.

The protein localises to the secreted. It localises to the target cell membrane. In terms of biological role, synergistic toxin that induces or increases a cytolytic effect when combined with CSTX-1 (AC P81694) or CSTX-9 (AC P58604). When alone, has a weak insecticidal activity, with an unknown molecular target. The sequence is that of Toxin CSTX-8 from Cupiennius salei (American wandering spider).